The chain runs to 135 residues: L-ectoine synthase (135 aa).

This sequence belongs to the ectoine synthase family.

It catalyses the reaction (2S)-4-acetamido-2-aminobutanoate = L-ectoine + H2O. It participates in amine and polyamine biosynthesis; ectoine biosynthesis; L-ectoine from L-aspartate 4-semialdehyde: step 3/3. Its function is as follows. Catalyzes the circularization of gamma-N-acetyl-alpha,gamma-diaminobutyric acid (ADABA) to ectoine (1,4,5,6-tetrahydro-2-methyl-4-pyrimidine carboxylic acid), which is an excellent osmoprotectant. This is L-ectoine synthase from Hyphomonas neptunium (strain ATCC 15444).